Reading from the N-terminus, the 502-residue chain is ATP synthase subunit beta (502 aa).

153 to 160 provides a ligand contact to ATP; the sequence is GGAGVGKT.

This sequence belongs to the ATPase alpha/beta chains family. As to quaternary structure, F-type ATPases have 2 components, CF(1) - the catalytic core - and CF(0) - the membrane proton channel. CF(1) has five subunits: alpha(3), beta(3), gamma(1), delta(1), epsilon(1). CF(0) has three main subunits: a(1), b(2) and c(9-12). The alpha and beta chains form an alternating ring which encloses part of the gamma chain. CF(1) is attached to CF(0) by a central stalk formed by the gamma and epsilon chains, while a peripheral stalk is formed by the delta and b chains.

The protein resides in the cell membrane. The catalysed reaction is ATP + H2O + 4 H(+)(in) = ADP + phosphate + 5 H(+)(out). Its function is as follows. Produces ATP from ADP in the presence of a proton gradient across the membrane. The catalytic sites are hosted primarily by the beta subunits. The chain is ATP synthase subunit beta from Amoebophilus asiaticus (strain 5a2).